Consider the following 344-residue polypeptide: Dihydroorotate dehydrogenase (quinone) (344 aa).

Residues 62–66 (AGLDK) and T86 each bind FMN. Substrate is bound at residue K66. Substrate is bound at residue 111–115 (NRMGF). FMN contacts are provided by N139 and N172. A substrate-binding site is contributed by N172. S175 (nucleophile) is an active-site residue. N177 contacts substrate. FMN is bound by residues K217 and T245. Position 246-247 (246-247 (NT)) interacts with substrate. Residues G268, G297, and 318 to 319 (YS) each bind FMN.

It belongs to the dihydroorotate dehydrogenase family. Type 2 subfamily. In terms of assembly, monomer. FMN serves as cofactor.

It localises to the cell membrane. The enzyme catalyses (S)-dihydroorotate + a quinone = orotate + a quinol. Its pathway is pyrimidine metabolism; UMP biosynthesis via de novo pathway; orotate from (S)-dihydroorotate (quinone route): step 1/1. Catalyzes the conversion of dihydroorotate to orotate with quinone as electron acceptor. This chain is Dihydroorotate dehydrogenase (quinone), found in Chromobacterium violaceum (strain ATCC 12472 / DSM 30191 / JCM 1249 / CCUG 213 / NBRC 12614 / NCIMB 9131 / NCTC 9757 / MK).